The sequence spans 90 residues: Probable Fe(2+)-trafficking protein (90 aa).

It belongs to the Fe(2+)-trafficking protein family.

Functionally, could be a mediator in iron transactions between iron acquisition and iron-requiring processes, such as synthesis and/or repair of Fe-S clusters in biosynthetic enzymes. In Pseudomonas putida (strain ATCC 700007 / DSM 6899 / JCM 31910 / BCRC 17059 / LMG 24140 / F1), this protein is Probable Fe(2+)-trafficking protein.